Here is a 214-residue protein sequence, read N- to C-terminus: Ion-translocating oxidoreductase complex subunit G (214 aa).

A helical transmembrane segment spans residues Ala-13 to Phe-33. At Thr-180 the chain carries FMN phosphoryl threonine.

It belongs to the RnfG family. The complex is composed of six subunits: RnfA, RnfB, RnfC, RnfD, RnfE and RnfG. The cofactor is FMN.

Its subcellular location is the cell inner membrane. Its function is as follows. Part of a membrane-bound complex that couples electron transfer with translocation of ions across the membrane. In Pseudomonas aeruginosa (strain UCBPP-PA14), this protein is Ion-translocating oxidoreductase complex subunit G.